A 139-amino-acid polypeptide reads, in one-letter code: Plasmid stability protein StbB (139 aa).

Positions 2-136 constitute a PINc domain; that stretch reads ILLDTNVISE…EAAGLNVINP (135 aa). Positions 5 and 104 each coordinate Mg(2+).

Belongs to the PINc/VapC protein family. The cofactor is Mg(2+).

Functionally, toxic component of a type II toxin-antitoxin (TA) system. An RNase. Involved in plasmid stability. The sequence is that of Plasmid stability protein StbB (stbB) from Pseudomonas syringae pv. tomato (strain ATCC BAA-871 / DC3000).